A 325-amino-acid polypeptide reads, in one-letter code: Leucine-rich repeat protein FLOR 1 (325 aa).

LRR repeat units follow at residues 65–88 (NRRVTGLSVTSGEVSGQISYQIGD), 89–114 (LVDLRTLDFSYLPHLTGNIPRTITKL), 115–140 (KNLNTLYLKHTSLSGPIPDYISELKS), 142–162 (TFLDLSFNQFTGPIPGSLSQM), 163–185 (PKLEAIQINDNKLTGSIPNSFGS), 187–211 (VGNVPNLYLSNNKLSGKIPESLSKY), 213–233 (FNAVDLSGNGFEGDAFMFFGR), 234–256 (NKTTVRVDLSRNMFNFDLVKVKF), 257–280 (ARSIVSLDLSQNHIYGKIPPALTK), and 281–305 (LHLEHFNVSDNHLCGKIPSGGLLQT).

This sequence belongs to the polygalacturonase-inhibiting protein family. Interacts with MADS domain transcription factors during flower development. Component of a complex made of FLOR1, VSP1 and AGAMOUS (AG). Binds directly with AG. Confined to flowers and inflorescences (e.g. inflorescence meristems, floral meristems, stamens and carpels).

Its subcellular location is the cytoplasm. It localises to the nucleus. The protein localises to the perinuclear region. It is found in the cell membrane. In terms of biological role, promotes flowering transition in long days (LD). This Arabidopsis thaliana (Mouse-ear cress) protein is Leucine-rich repeat protein FLOR 1.